Consider the following 550-residue polypeptide: Parathyroid hormone 2 receptor (550 aa).

Residues 1 to 24 (MAGLGASLHVWGWLMLGSCLLARA) form the signal peptide. Over 27 to 145 (DSDGTITIEE…GKQEFFERLY (119 aa)) the chain is Extracellular. Residues Asn51, Asn106, Asn116, and Asn121 are each glycosylated (N-linked (GlcNAc...) asparagine). The helical transmembrane segment at 146–169 (VMYTVGYSISFGSLAVAILIIGYF) threads the bilayer. Residues 170–176 (RRLHCTR) lie on the Cytoplasmic side of the membrane. A helical transmembrane segment spans residues 177–196 (NYIHMHLFVSFMLRATSIFV). Residues 197 to 237 (KDRVVHAHIGVKELESLIMQDDPQNSIEATSVDKSQYIGCK) are Extracellular-facing. A helical transmembrane segment spans residues 238-260 (IAVVMFIYFLATNYYWILVEGLY). Residues 261–275 (LHNLIFVAFFSDTKY) lie on the Cytoplasmic side of the membrane. Residues 276-297 (LWGFILIGWGFPAAFVAAWAVA) form a helical membrane-spanning segment. At 298-316 (RATLADARCWELSAGDIKW) the chain is on the extracellular side. A helical membrane pass occupies residues 317-337 (IYQAPILAAIGLNFILFLNTV). The Cytoplasmic portion of the chain corresponds to 338–364 (RVLATKIWETNAVGHDTRKQYRKLAKS). Residues 365–383 (TLVLVLVFGVHYIVFVCLP) form a helical membrane-spanning segment. Over 384 to 394 (HSFTGLGWEIR) the chain is Extracellular. A helical transmembrane segment spans residues 395 to 417 (MHCELFFNSFQGFFVSIIYCYCN). Residues 418 to 550 (GEVQAEVKKM…GCQGETEDVL (133 aa)) lie on the Cytoplasmic side of the membrane. Residues 511 to 531 (EETKEDSGRQGDDILMEKPSR) show a composition bias toward basic and acidic residues. Residues 511–550 (EETKEDSGRQGDDILMEKPSRPMESNPDTEGCQGETEDVL) form a disordered region.

Belongs to the G-protein coupled receptor 2 family. In terms of assembly, binds to TIPF39/TIP39. In terms of tissue distribution, expressed abundantly in brain and pancreas. Also expressed in the testis.

The protein resides in the cell membrane. In terms of biological role, this is a specific receptor for parathyroid hormone. The activity of this receptor is mediated by G proteins which activate adenylyl cyclase. PTH2R may be responsible for PTH effects in a number of physiological systems. It may play a significant role in pancreatic function. PTH2R presence in neurons indicates that it may function as a neurotransmitter receptor. In Homo sapiens (Human), this protein is Parathyroid hormone 2 receptor (PTH2R).